A 730-amino-acid polypeptide reads, in one-letter code: Exostosin-1a (730 aa).

Residues 1-6 lie on the Cytoplasmic side of the membrane; that stretch reads MQAKKR. Residues 7–27 traverse the membrane as a helical; Signal-anchor for type II membrane protein segment; the sequence is YLILFSAGVCLILLFYLQGPA. Residues 28-730 lie on the Lumenal side of the membrane; it reads SRRTPKRGDD…RKKYRDIERL (703 aa). Asparagine 314 carries an N-linked (GlcNAc...) asparagine glycan. UDP-N-acetyl-alpha-D-glucosamine-binding residues include arginine 533, aspartate 549, glutamate 550, aspartate 551, glutamate 637, aspartate 638, and arginine 685. Residue aspartate 551 coordinates Mn(2+). Cysteine 636 and cysteine 688 are joined by a disulfide. Aspartate 638 is an active-site residue.

The protein belongs to the glycosyltransferase 47 family. Mn(2+) serves as cofactor.

The protein resides in the endoplasmic reticulum membrane. The catalysed reaction is 3-O-{[(1-&gt;4)-beta-D-GlcA-(1-&gt;4)-alpha-D-GlcNAc](n)-(1-&gt;4)-beta-D-GlcA-(1-&gt;3)-beta-D-Gal-(1-&gt;3)-beta-D-Gal-(1-&gt;4)-beta-D-Xyl}-L-seryl-[protein] + UDP-N-acetyl-alpha-D-glucosamine = 3-O-{alpha-D-GlcNAc-[(1-&gt;4)-beta-D-GlcA-(1-&gt;4)-alpha-D-GlcNAc](n)-(1-&gt;4)-beta-D-GlcA-(1-&gt;3)-beta-D-Gal-(1-&gt;3)-beta-D-Gal-(1-&gt;4)-beta-D-Xyl}-L-seryl-[protein] + UDP + H(+). It carries out the reaction 3-O-{alpha-D-GlcNAc-[(1-&gt;4)-beta-D-GlcA-(1-&gt;4)-alpha-D-GlcNAc](n)-(1-&gt;4)-beta-D-GlcA-(1-&gt;3)-beta-D-Gal-(1-&gt;3)-beta-D-Gal-(1-&gt;4)-beta-D-Xyl}-L-seryl-[protein] + UDP-alpha-D-glucuronate = 3-O-{[(1-&gt;4)-beta-D-GlcA-(1-&gt;4)-alpha-D-GlcNAc](n+1)-(1-&gt;4)-beta-D-GlcA-(1-&gt;3)-beta-D-Gal-(1-&gt;3)-beta-D-Gal-(1-&gt;4)-beta-D-Xyl}-L-seryl-[protein] + UDP + H(+). Its pathway is protein modification; protein glycosylation. Glycosyltransferase required for the biosynthesis of heparan-sulfate. The protein is Exostosin-1a (ext1a) of Danio rerio (Zebrafish).